The following is a 612-amino-acid chain: Peroxisomal targeting signal receptor (612 aa).

Residue methionine 1 is modified to N-acetylmethionine. A disordered region spans residues 1–24; it reads MDVGSCSVGNNPLAQLHKHTQQNK. Residue cysteine 6 forms a Glycyl cysteine thioester (Cys-Gly) (interchain with G-Cter in ubiquitin) linkage. The interval 7–29 is amphipathic helix 1 (AH1); the sequence is SVGNNPLAQLHKHTQQNKSLQFN. Glycyl lysine isopeptide (Lys-Gly) (interchain with G-Cter in ubiquitin) cross-links involve residues lysine 18 and lysine 24. Phosphoserine is present on serine 61. The stretch at 64–97 is one TPR 1 repeat; the sequence is NMANMQRFINGEPLIDDKRRMEIGPSSGRLPPFS. Residues 70–104 form an amphipathic helix 2 (AH2) region; the sequence is RFINGEPLIDDKRRMEIGPSSGRLPPFSNVHSLQT. The short motif at 120 to 124 is the WxxxF/Y motif 1 element; it reads WSQEF. The segment at 129–151 is disordered; the sequence is SIQNRNADTGNSEKAWQRGSTTA. The interval 158-174 is amphipathic helix 3 (AH3); the sequence is PNTMMNNYAYASMNSLS. The disordered stretch occupies residues 182 to 202; the sequence is AFMNQQQSGRSKEGVNEQEQQ. A WxxxF/Y motif 2 motif is present at residues 204 to 208; sequence WTDQF. Residues 257-273 form an amphipathic helix 4 (AH4) region; sequence FQEVWDSIHKDAEEVLP. TPR repeat units lie at residues 313–346, 347–380, 381–418, 419–456, 457–490, 491–524, and 525–558; these read PNAY…KPDH, VDAW…DPKN, LEAM…IWSR, IKQQ…STID, PEIQ…NPND, ELMW…KPSF, and VRAR…HEVN.

Belongs to the peroxisomal targeting signal receptor family. As to quaternary structure, interacts (via WxxxF/Y and LVxEF motifs) with PEX14; promoting translocation through the PEX13-PEX14 docking complex. In terms of processing, monoubiquitinated at Cys-6 by PEX2 during PEX5 passage through the retrotranslocation channel: monoubiquitination acts as a signal for PEX5 extraction and is required for proper export from peroxisomes and recycling. Ubiquitination at Cys-6 is UBC4-independent but requires the presence of PEX4. When PEX5 recycling is compromised, polyubiquitinated at Lys-18 and Lys-24 by PEX10 during its passage through the retrotranslocation channel, leading to its degradation. Ubiquitination at Lys-18 and Lys-24 are UBC4-dependent. Monoubiquitination at Cys-6 and polyubiquitination at Lys-18 and Lys-24 are removed by UBP15 in the cytosol, resetting PEX5 for a subsequent import cycle.

It localises to the cytoplasm. It is found in the cytosol. The protein localises to the peroxisome matrix. Receptor that mediates peroxisomal import of proteins containing a C-terminal PTS1-type tripeptide peroxisomal targeting signal (SKL-type). Binds to cargo proteins containing a PTS1 peroxisomal targeting signal in the cytosol, and translocates them into the peroxisome matrix by passing through the PEX13-PEX14 docking complex along with cargo proteins. PEX5 receptor is then retrotranslocated into the cytosol, leading to release of bound cargo in the peroxisome matrix, and reset for a subsequent peroxisome import cycle. In Saccharomyces cerevisiae (strain ATCC 204508 / S288c) (Baker's yeast), this protein is Peroxisomal targeting signal receptor.